The sequence spans 778 residues: Molybdenum cofactor sulfurase (778 aa).

Lysine 235 carries the post-translational modification N6-(pyridoxal phosphate)lysine. Residue cysteine 399 is part of the active site. 2 disordered regions span residues 576–596 and 654–673; these read LSKN…SRVC and ARPA…DTEK. A compositionally biased stretch (low complexity) spans 584 to 594; that stretch reads RSSSSRSRSSR. The region spanning 651–778 is the MOSC domain; sequence LPTARPALPG…ETAERARSRL (128 aa).

This sequence belongs to the class-V pyridoxal-phosphate-dependent aminotransferase family. MOCOS subfamily. Pyridoxal 5'-phosphate is required as a cofactor.

The catalysed reaction is Mo-molybdopterin + L-cysteine + AH2 = thio-Mo-molybdopterin + L-alanine + A + H2O. Its pathway is cofactor biosynthesis; molybdopterin biosynthesis. Functionally, sulfurates the molybdenum cofactor. Sulfation of molybdenum is essential for xanthine dehydrogenase (XDH) and aldehyde oxidase (ADO) enzymes in which molybdenum cofactor is liganded by 1 oxygen and 1 sulfur atom in active form. The protein is Molybdenum cofactor sulfurase of Chaetomium globosum (strain ATCC 6205 / CBS 148.51 / DSM 1962 / NBRC 6347 / NRRL 1970) (Soil fungus).